A 526-amino-acid chain; its full sequence is ATP synthase subunit alpha (526 aa).

171 to 178 is an ATP binding site; it reads GDRQTGKT.

This sequence belongs to the ATPase alpha/beta chains family. F-type ATPases have 2 components, CF(1) - the catalytic core - and CF(0) - the membrane proton channel. CF(1) has five subunits: alpha(3), beta(3), gamma(1), delta(1), epsilon(1). CF(0) has four main subunits: a, b, b' and c.

It localises to the cell inner membrane. The catalysed reaction is ATP + H2O + 4 H(+)(in) = ADP + phosphate + 5 H(+)(out). In terms of biological role, produces ATP from ADP in the presence of a proton gradient across the membrane. The alpha chain is a regulatory subunit. The sequence is that of ATP synthase subunit alpha from Pelodictyon phaeoclathratiforme (strain DSM 5477 / BU-1).